The primary structure comprises 826 residues: DNA mismatch repair protein MutS (826 aa).

Residue 622–629 (GPNMAGKS) participates in ATP binding.

It belongs to the DNA mismatch repair MutS family.

In terms of biological role, this protein is involved in the repair of mismatches in DNA. It is possible that it carries out the mismatch recognition step. This protein has a weak ATPase activity. This is DNA mismatch repair protein MutS from Chlamydia abortus (strain DSM 27085 / S26/3) (Chlamydophila abortus).